The sequence spans 354 residues: MREFCTKWWKRIATVDMLFIGVLTLLASLFASWLKQFPGFSLFGALIIALLIGMIIQFPIRSAYVGSNDGRKAGVKDAAGLISNKLLRLGIILLGFKLNLAVLFTQGIKCLPIAAVVVTLTIIVCYAIARKLGVDPMLAILTAGGTGICGAAAVMGLAGSIKVPEDKQDEKDNDVTMAVAIVAIMGTVFALLEIALGPLTGMTKDQLGITAGASLHEIAHAVAGGDAFGAVDIATIMKLSRVLMLVFAAIIIAIWWEKKHSEVQSTGKKTVAFPWFMLGFIGASIIGTFVPFVTSITPQLVDFAYIVLGMAMAALGINVNFKAIASKGKKPMLASFLTSILLMCFAAGVAMLFF.

10 helical membrane passes run 12–33, 43–65, 86–108, 112–129, 138–160, 175–197, 239–256, 271–293, 300–321, and 331–353; these read IATVDMLFIGVLTLLASLFASW, FGALIIALLIGMIIQFPIRSAYV, LLRLGIILLGFKLNLAVLFTQGI, PIAAVVVTLTIIVCYAIA, LAILTAGGTGICGAAAVMGLAGS, VTMAVAIVAIMGTVFALLEIALG, LSRVLMLVFAAIIIAIWW, VAFPWFMLGFIGASIIGTFVPFV, LVDFAYIVLGMAMAALGINVNF, and PMLASFLTSILLMCFAAGVAMLF.

Belongs to the UPF0324 family.

Its subcellular location is the cell membrane. The protein is UPF0324 membrane protein BL1094 of Bifidobacterium longum (strain NCC 2705).